Here is a 392-residue protein sequence, read N- to C-terminus: Formate-dependent phosphoribosylglycinamide formyltransferase (392 aa).

N(1)-(5-phospho-beta-D-ribosyl)glycinamide contacts are provided by residues 22–23 (EL) and Glu-82. ATP-binding positions include Arg-114, Lys-155, 160–165 (SSGKGQ), 195–198 (EGEV), and Glu-203. The ATP-grasp domain occupies 119-308 (RLAAETLALP…EFALHVRAFL (190 aa)). 2 residues coordinate Mg(2+): Glu-267 and Glu-279. Residues Asp-286, Lys-355, and 362-363 (RR) contribute to the N(1)-(5-phospho-beta-D-ribosyl)glycinamide site.

Belongs to the PurK/PurT family. Homodimer.

It catalyses the reaction N(1)-(5-phospho-beta-D-ribosyl)glycinamide + formate + ATP = N(2)-formyl-N(1)-(5-phospho-beta-D-ribosyl)glycinamide + ADP + phosphate + H(+). The protein operates within purine metabolism; IMP biosynthesis via de novo pathway; N(2)-formyl-N(1)-(5-phospho-D-ribosyl)glycinamide from N(1)-(5-phospho-D-ribosyl)glycinamide (formate route): step 1/1. Involved in the de novo purine biosynthesis. Catalyzes the transfer of formate to 5-phospho-ribosyl-glycinamide (GAR), producing 5-phospho-ribosyl-N-formylglycinamide (FGAR). Formate is provided by PurU via hydrolysis of 10-formyl-tetrahydrofolate. The chain is Formate-dependent phosphoribosylglycinamide formyltransferase from Edwardsiella ictaluri (strain 93-146).